The chain runs to 295 residues: Cyclin-G1 (295 aa).

It belongs to the cyclin family. Cyclin G subfamily.

Its subcellular location is the nucleus. May play a role in growth regulation. Is associated with G2/M phase arrest in response to DNA damage. May be an intermediate by which p53 mediates its role as an inhibitor of cellular proliferation. This Pongo abelii (Sumatran orangutan) protein is Cyclin-G1 (CCNG1).